The primary structure comprises 354 residues: Arginase-2, mitochondrial (354 aa).

The N-terminal 22 residues, Met-1 to Ser-22, are a transit peptide targeting the mitochondrion. Residues His-120, Asp-143, His-145, and Asp-147 each coordinate Mn(2+). Substrate-binding positions include His-145 to Asn-149, Ser-156 to Asn-158, and Glu-202. Mn(2+) is bound by residues Asp-251 and Asp-253. Positions 265 and 296 each coordinate substrate.

Belongs to the arginase family. As to quaternary structure, homotrimer. Mn(2+) serves as cofactor.

It is found in the mitochondrion. The enzyme catalyses L-arginine + H2O = urea + L-ornithine. Its pathway is nitrogen metabolism; urea cycle; L-ornithine and urea from L-arginine: step 1/1. Its function is as follows. May play a role in the regulation of extra-urea cycle arginine metabolism and also in down-regulation of nitric oxide synthesis. Extrahepatic arginase functions to regulate L-arginine bioavailability to nitric oxid synthase (NOS). Arginine metabolism is a critical regulator of innate and adaptive immune responses. Seems to be involved in negative regulation of the survival capacity of activated T cells. May suppress inflammation-related signaling in asthmatic airway epithelium. May play a role in promoting prenatal immune suppression. Regulates RPS6KB1 signaling, which promotes endothelial cell senescence and inflammation and implicates NOS3/eNOS dysfunction. Can inhibit endothelial autophagy independently of its enzymatic activity implicating mTORC2 signaling. Involved in vascular smooth muscle cell senescence and apoptosis independently of its enzymatic activity. In Rattus norvegicus (Rat), this protein is Arginase-2, mitochondrial (Arg2).